Here is a 320-residue protein sequence, read N- to C-terminus: N-acetylneuraminate lyase (320 aa).

Aceneuramate-binding residues include Thr51 and Thr52. The Proton donor role is filled by Tyr143. Lys173 (schiff-base intermediate with substrate) is an active-site residue. 5 residues coordinate aceneuramate: Ser175, Gly199, Asp201, Glu202, and Ser218.

The protein belongs to the DapA family. NanA subfamily. Homotetramer. Isoform 2 is expressed in placenta, liver, kidney, pancreas, spleen, thymus, ovary, small intestine and peripheral blood leukocyte.

Its subcellular location is the cytoplasm. The catalysed reaction is aceneuramate = aldehydo-N-acetyl-D-mannosamine + pyruvate. It participates in amino-sugar metabolism; N-acetylneuraminate degradation. Catalyzes the cleavage of N-acetylneuraminic acid (sialic acid) to form pyruvate and N-acetylmannosamine via a Schiff base intermediate. It prevents sialic acids from being recycled and returning to the cell surface. Involved in the N-glycolylneuraminic acid (Neu5Gc) degradation pathway. Although human is not able to catalyze formation of Neu5Gc due to the inactive CMAHP enzyme, Neu5Gc is present in food and must be degraded. In Homo sapiens (Human), this protein is N-acetylneuraminate lyase.